The following is a 628-amino-acid chain: tRNA (guanine(37)-N(1))-methyltransferase (628 aa).

Residues His265, 303-304, 342-343, and Asn445 contribute to the S-adenosyl-L-methionine site; these read DL and DG.

It belongs to the class I-like SAM-binding methyltransferase superfamily. TRM5/TYW2 family. In terms of assembly, monomer.

The protein localises to the mitochondrion matrix. Its subcellular location is the nucleus. It is found in the cytoplasm. It carries out the reaction guanosine(37) in tRNA + S-adenosyl-L-methionine = N(1)-methylguanosine(37) in tRNA + S-adenosyl-L-homocysteine + H(+). Specifically methylates the N1 position of guanosine-37 in various cytoplasmic and mitochondrial tRNAs. Methylation is not dependent on the nature of the nucleoside 5' of the target nucleoside. This is the first step in the biosynthesis of wybutosine (yW), a modified base adjacent to the anticodon of tRNAs and required for accurate decoding. The protein is tRNA (guanine(37)-N(1))-methyltransferase of Mycosarcoma maydis (Corn smut fungus).